The chain runs to 473 residues: H(+)/Cl(-) exchange transporter ClcA (473 aa).

The Cytoplasmic portion of the chain corresponds to 1-32 (MNTDTPTFEAQQVVRLRRGDLIRRLLQRDKTP). Residues 33 to 69 (LAILLTAAVVGTVTGLIGVAFEKAVTWVQNLRIGALV) traverse the membrane as a helical segment. Residues 70 to 76 (QTADYAI) lie on the Periplasmic side of the membrane. The chain crosses the membrane as a helical span at residues 77–100 (LVWPLAFILSALLAMVGYFLVRKF). Topologically, residues 101-108 (APEAGGSG) are cytoplasmic. A Selectivity filter part_1 motif is present at residues 106–110 (GSGIP). Ser107 serves as a coordination point for chloride. The helical intramembrane region spans 109–116 (IPEIEGAL). At 117–123 (EELRPVR) the chain is on the cytoplasmic side. A helical transmembrane segment spans residues 124–141 (WWRVLPVKFVGGMGTLGA). The Periplasmic portion of the chain corresponds to 142 to 147 (GMVLGR). Positions 146–150 (GREGP) match the Selectivity filter part_2 motif. Residues 148 to 166 (EGPTVQIGGNIGRMVLDLF) traverse the membrane as a helical segment. At 167 to 176 (RMRSAEARHT) the chain is on the cytoplasmic side. 2 consecutive intramembrane regions (helical) follow at residues 177–189 (LLATGAAAGLSAA) and 193–201 (PLAGILFII). Residues 202–214 (EEMRPQFRYNLIS) are Cytoplasmic-facing. The helical transmembrane segment at 215-232 (IKAVFTGVIMSSIVFRIF) threads the bilayer. Over 233 to 252 (NGEAPIIEVGKLSNAPVNTL) the chain is Periplasmic. The helical transmembrane segment at 253 to 281 (WLYLILGMIFGCVGPLFNHLVLRTQDMFQ) threads the bilayer. Over 282–287 (RFHGGE) the chain is Cytoplasmic. A helical membrane pass occupies residues 288–309 (IKKWVLMGGAIGGLCGILGLIE). Over 310–329 (PEAAGGGFNLIPIAAAGNYS) the chain is Periplasmic. Residues 330–349 (VGLLLFIFIARVLTTLLCFS) form a helical membrane-spanning segment. At 350–354 (SGAPG) the chain is on the cytoplasmic side. A Selectivity filter part_3 motif is present at residues 355–359 (GIFAP). Residues 355 to 376 (GIFAPMLALGTLLGTAFGMAAA) form a helical membrane-spanning segment. Residues Ile356 and Phe357 each coordinate chloride. The Periplasmic portion of the chain corresponds to 377 to 386 (ACFPQYHLEA). Residues 387 to 401 (GTFAIAGMGALLAAS) constitute an intramembrane region (helical). The note=Loop between two helices intramembrane region spans 402-404 (VRA). The helical intramembrane region spans 405–416 (PLTGIVLVLEMT). Residues 417–421 (DNYQL) constitute an intramembrane region (note=Loop between two helices). A helical membrane pass occupies residues 422-438 (ILPMIITCLGATLLAQF). Over 439–473 (MGGKPLYSTILARTLAKQDAEQAAKSQRSVAGENT) the chain is Cytoplasmic. Tyr445 provides a ligand contact to chloride.

This sequence belongs to the chloride channel (TC 2.A.49) family. ClcA subfamily. Homodimer.

It localises to the cell inner membrane. It carries out the reaction 2 chloride(in) + H(+)(out) = 2 chloride(out) + H(+)(in). Proton-coupled chloride transporter. Functions as antiport system and exchanges two chloride ions for 1 proton. Probably acts as an electrical shunt for an outwardly-directed proton pump that is linked to amino acid decarboxylation, as part of the extreme acid resistance (XAR) response. The sequence is that of H(+)/Cl(-) exchange transporter ClcA from Citrobacter koseri (strain ATCC BAA-895 / CDC 4225-83 / SGSC4696).